Consider the following 91-residue polypeptide: UPF0250 protein mma_3250 (91 aa).

This sequence belongs to the UPF0250 family.

This is UPF0250 protein mma_3250 from Janthinobacterium sp. (strain Marseille) (Minibacterium massiliensis).